The sequence spans 507 residues: ATP synthase subunit alpha, chloroplastic (507 aa).

Residue 170 to 177 (GDRQTGKT) participates in ATP binding.

It belongs to the ATPase alpha/beta chains family. F-type ATPases have 2 components, CF(1) - the catalytic core - and CF(0) - the membrane proton channel. CF(1) has five subunits: alpha(3), beta(3), gamma(1), delta(1), epsilon(1). CF(0) has four main subunits: a, b, b' and c.

The protein localises to the plastid. It is found in the chloroplast thylakoid membrane. The catalysed reaction is ATP + H2O + 4 H(+)(in) = ADP + phosphate + 5 H(+)(out). Functionally, produces ATP from ADP in the presence of a proton gradient across the membrane. The alpha chain is a regulatory subunit. The sequence is that of ATP synthase subunit alpha, chloroplastic from Chloranthus spicatus (Chulantree).